The sequence spans 427 residues: Glutamate-1-semialdehyde 2,1-aminomutase (427 aa).

N6-(pyridoxal phosphate)lysine is present on Lys265.

It belongs to the class-III pyridoxal-phosphate-dependent aminotransferase family. HemL subfamily. As to quaternary structure, homodimer. Requires pyridoxal 5'-phosphate as cofactor.

It localises to the cytoplasm. It carries out the reaction (S)-4-amino-5-oxopentanoate = 5-aminolevulinate. It participates in porphyrin-containing compound metabolism; protoporphyrin-IX biosynthesis; 5-aminolevulinate from L-glutamyl-tRNA(Glu): step 2/2. The polypeptide is Glutamate-1-semialdehyde 2,1-aminomutase (Bordetella parapertussis (strain 12822 / ATCC BAA-587 / NCTC 13253)).